The sequence spans 203 residues: Ribonuclease HII (203 aa).

Residues 18–203 (GHYAGVDEVG…SFRPVREALA (186 aa)) form the RNase H type-2 domain. 3 residues coordinate a divalent metal cation: Asp24, Glu25, and Asp116.

It belongs to the RNase HII family. The cofactor is Mn(2+). It depends on Mg(2+) as a cofactor.

The protein localises to the cytoplasm. The catalysed reaction is Endonucleolytic cleavage to 5'-phosphomonoester.. Its function is as follows. Endonuclease that specifically degrades the RNA of RNA-DNA hybrids. In Shewanella halifaxensis (strain HAW-EB4), this protein is Ribonuclease HII.